The sequence spans 451 residues: Glyceraldehyde-3-phosphate dehydrogenase B, chloroplastic (451 aa).

A disordered region spans residues 1-25 (MATHAALASTRIPTNTRFPSKTSHS). A chloroplast-targeting transit peptide spans 1 to 84 (MATHAALAST…STAVKGVTVA (84 aa)). Residues 11–25 (RIPTNTRFPSKTSHS) are compositionally biased toward polar residues. NADP(+) is bound by residues 95-96 (RI), aspartate 119, and arginine 164. D-glyceraldehyde 3-phosphate-binding positions include 238–240 (SCT), threonine 269, arginine 284, 297–298 (TG), and arginine 320. Cysteine 239 (nucleophile) is an active-site residue. Asparagine 403 serves as a coordination point for NADP(+).

This sequence belongs to the glyceraldehyde-3-phosphate dehydrogenase family. Tetramer of either four A chains (GAPDH 2) or two A and two B chains (GAPDH 1).

Its subcellular location is the plastid. It is found in the chloroplast. The catalysed reaction is D-glyceraldehyde 3-phosphate + phosphate + NADP(+) = (2R)-3-phospho-glyceroyl phosphate + NADPH + H(+). The protein operates within carbohydrate biosynthesis; Calvin cycle. This is Glyceraldehyde-3-phosphate dehydrogenase B, chloroplastic (GAPB) from Pisum sativum (Garden pea).